Here is a 404-residue protein sequence, read N- to C-terminus: cAMP-dependent protein kinase regulatory subunit (404 aa).

The tract at residues 14–144 (LTDHELLRIP…RLKTAIAGNF (131 aa)) is dimerization and phosphorylation. At Ser-105 the chain carries Phosphoserine. Residues 145 to 276 (LFSH…EKFP), Glu-223, Arg-232, 277 to 398 (CCRH…GVEE), Glu-344, and Arg-353 each bind 3',5'-cyclic AMP.

It belongs to the cAMP-dependent kinase regulatory chain family. In terms of assembly, tetramer, composed of 2 regulatory (R) and 2 catalytic (C) subunits. In the presence of cAMP it dissociates into 2 active monomeric C subunits and an R dimer.

Functionally, cAMP-dependent protein kinase PKA regulatory subunit. This is cAMP-dependent protein kinase regulatory subunit (PKAR) from Colletotrichum trifolii.